The sequence spans 37 residues: Large ribosomal subunit protein bL36 (37 aa).

It belongs to the bacterial ribosomal protein bL36 family.

The polypeptide is Large ribosomal subunit protein bL36 (Helicobacter pylori (strain HPAG1)).